The primary structure comprises 327 residues: Phenylalanine--tRNA ligase alpha subunit (327 aa).

Glu252 is a binding site for Mg(2+).

Belongs to the class-II aminoacyl-tRNA synthetase family. Phe-tRNA synthetase alpha subunit type 1 subfamily. Tetramer of two alpha and two beta subunits. Mg(2+) serves as cofactor.

The protein resides in the cytoplasm. It catalyses the reaction tRNA(Phe) + L-phenylalanine + ATP = L-phenylalanyl-tRNA(Phe) + AMP + diphosphate + H(+). The protein is Phenylalanine--tRNA ligase alpha subunit of Glaesserella parasuis serovar 5 (strain SH0165) (Haemophilus parasuis).